The sequence spans 144 residues: UPF0735 ACT domain-containing protein LSEI_1046 (144 aa).

Positions 68–143 (VISLMLHHDR…GVSDVHLVSV (76 aa)) constitute an ACT domain.

It belongs to the UPF0735 family.

This chain is UPF0735 ACT domain-containing protein LSEI_1046, found in Lacticaseibacillus paracasei (strain ATCC 334 / BCRC 17002 / CCUG 31169 / CIP 107868 / KCTC 3260 / NRRL B-441) (Lactobacillus paracasei).